A 132-amino-acid chain; its full sequence is Putative holo-[acyl-carrier-protein] synthase (132 aa).

Mg(2+)-binding residues include aspartate 6 and glutamate 67.

It belongs to the P-Pant transferase superfamily. AcpS family.

The catalysed reaction is apo-[ACP] + CoA = holo-[ACP] + adenosine 3',5'-bisphosphate + H(+). Transfers the 4'-phosphopantetheine moiety from coenzyme A to a Ser of acyl-carrier-protein. The chain is Putative holo-[acyl-carrier-protein] synthase (new8) from Schizosaccharomyces pombe (strain 972 / ATCC 24843) (Fission yeast).